Consider the following 340-residue polypeptide: Guanine nucleotide-binding protein subunit beta-4 (340 aa).

An N-acetylserine modification is found at Ser-2. The residue at position 2 (Ser-2) is a Phosphoserine. WD repeat units follow at residues Gly-53–Ala-92, Leu-95–Arg-134, Gly-141–Thr-179, Gly-182–Ser-221, and Gly-224–Leu-263. His-266 is modified (phosphohistidine). 2 WD repeats span residues Asn-268–Val-307 and Gly-310–Trp-339.

Belongs to the WD repeat G protein beta family. G proteins are composed of 3 units, alpha, beta and gamma. As to expression, strongly expressed in lung and placenta, whereas it is weakly expressed in brain and heart. Abundantly expressed in the axons and Schwann cells of peripheral nerves.

Guanine nucleotide-binding proteins (G proteins) are involved as a modulator or transducer in various transmembrane signaling systems. The beta and gamma chains are required for the GTPase activity, for replacement of GDP by GTP, and for G protein-effector interaction. This Homo sapiens (Human) protein is Guanine nucleotide-binding protein subunit beta-4 (GNB4).